Consider the following 321-residue polypeptide: uncharacterized protein (321 aa).

The 58-residue stretch at 1-58 folds into the HTH lysR-type domain; sequence MTPAQLRAYSAVVRLGSVRAAAAELGLSDAGVSMHVAALRKELDDPLFTRTGAGLAFT. A DNA-binding region (H-T-H motif) is located at residues 18–37; that stretch reads VRAAAAELGLSDAGVSMHVA.

It belongs to the LysR transcriptional regulatory family.

This is an uncharacterized protein from Mycobacterium tuberculosis (strain CDC 1551 / Oshkosh).